We begin with the raw amino-acid sequence, 691 residues long: ATP-dependent RNA helicase MRH4, mitochondrial (691 aa).

Residues 1–31 (MLIGQVSRLSAIPPLALQHTLRPLHSSSVLA) constitute a mitochondrion transit peptide. A disordered region spans residues 31-148 (AAGGKRPKQS…ATMPPNLTPR (118 aa)). A compositionally biased stretch (polar residues) spans 39–49 (QSPSHSRNSPR). Residues 50–68 (QKPDWEKRGSNRGRSEQPR) are compositionally biased toward basic and acidic residues. Over residues 94 to 103 (SDSSSGSSAS) the composition is skewed to low complexity. Residues 111 to 126 (VPTSSRRLLPFSSSDT) are compositionally biased toward polar residues. Positions 183–213 (RTFDDFGLEEGLVKSLKGLYGEDGKTTPIET) match the Q motif motif. Positions 225–433 (ASAPIGSQRV…TTNPFFTKKE (209 aa)) constitute a Helicase ATP-binding domain. 238–245 (AETGSGKT) serves as a coordination point for ATP. The DEAD box signature appears at 382-385 (DEAD). Residues 474-691 (TLAEDAKAAK…VGAMGKRVRT (218 aa)) enclose the Helicase C-terminal domain. The interval 644 to 667 (LGEGAKNNKGGKGQGPLKKDGKTA) is disordered.

It belongs to the DEAD box helicase family. MRH4 subfamily.

It localises to the mitochondrion. The catalysed reaction is ATP + H2O = ADP + phosphate + H(+). In terms of biological role, ATP-binding RNA helicase involved in mitochondrial RNA metabolism. Required for maintenance of mitochondrial DNA. This Cryptococcus neoformans var. neoformans serotype D (strain JEC21 / ATCC MYA-565) (Filobasidiella neoformans) protein is ATP-dependent RNA helicase MRH4, mitochondrial (MRH4).